Consider the following 130-residue polypeptide: MVRMNVLADALKSINNAEKRGKRQVLLRPCSKVIVRFLTVMMKHGYIGEFEIIDDHRAGKIVVNLTGRLNKCGVISPRFDVQLKDLEKWQNNLLPSRQFGFIVLTTSAGIMDHEEARRKHTGGKILGFFF.

This sequence belongs to the universal ribosomal protein uS8 family. As to quaternary structure, component of the 40S ribosomal subunit. Part of the small subunit (SSU) processome, composed of more than 70 proteins and the RNA chaperone small nucleolar RNA (snoRNA) U3.

Its subcellular location is the cytoplasm. It is found in the nucleus. It localises to the nucleolus. In terms of biological role, component of the small ribosomal subunit. Part of the small subunit (SSU) processome, first precursor of the small eukaryotic ribosomal subunit. During the assembly of the SSU processome in the nucleolus, many ribosome biogenesis factors, an RNA chaperone and ribosomal proteins associate with the nascent pre-rRNA and work in concert to generate RNA folding, modifications, rearrangements and cleavage as well as targeted degradation of pre-ribosomal RNA by the RNA exosome. Required for erythropoiesis during embryonic development. The chain is Small ribosomal subunit protein uS8 from Danio rerio (Zebrafish).